The chain runs to 229 residues: Large ribosomal subunit protein uL1 (229 aa).

This sequence belongs to the universal ribosomal protein uL1 family. As to quaternary structure, part of the 50S ribosomal subunit.

Binds directly to 23S rRNA. The L1 stalk is quite mobile in the ribosome, and is involved in E site tRNA release. Functionally, protein L1 is also a translational repressor protein, it controls the translation of the L11 operon by binding to its mRNA. The chain is Large ribosomal subunit protein uL1 from Rhodopseudomonas palustris (strain BisB5).